A 954-amino-acid polypeptide reads, in one-letter code: Glycine dehydrogenase (decarboxylating) (954 aa).

N6-(pyridoxal phosphate)lysine is present on Lys704.

It belongs to the GcvP family. As to quaternary structure, the glycine cleavage system is composed of four proteins: P, T, L and H. Pyridoxal 5'-phosphate serves as cofactor.

The enzyme catalyses N(6)-[(R)-lipoyl]-L-lysyl-[glycine-cleavage complex H protein] + glycine + H(+) = N(6)-[(R)-S(8)-aminomethyldihydrolipoyl]-L-lysyl-[glycine-cleavage complex H protein] + CO2. Its function is as follows. The glycine cleavage system catalyzes the degradation of glycine. The P protein binds the alpha-amino group of glycine through its pyridoxal phosphate cofactor; CO(2) is released and the remaining methylamine moiety is then transferred to the lipoamide cofactor of the H protein. The polypeptide is Glycine dehydrogenase (decarboxylating) (Vibrio parahaemolyticus serotype O3:K6 (strain RIMD 2210633)).